We begin with the raw amino-acid sequence, 1072 residues long: Isoleucine--tRNA ligase, cytoplasmic (1072 aa).

Positions 47-57 (PFATGTPHYGH) match the 'HIGH' region motif. Lysine 486 participates in a covalent cross-link: Glycyl lysine isopeptide (Lys-Gly) (interchain with G-Cter in ubiquitin). The 'KMSKS' region signature appears at 602 to 606 (KMSKS). Lysine 605 is an ATP binding site. 2 positions are modified to phosphoserine: serine 829 and serine 1059.

Belongs to the class-I aminoacyl-tRNA synthetase family.

It is found in the cytoplasm. It carries out the reaction tRNA(Ile) + L-isoleucine + ATP = L-isoleucyl-tRNA(Ile) + AMP + diphosphate. The sequence is that of Isoleucine--tRNA ligase, cytoplasmic (ILS1) from Saccharomyces cerevisiae (strain ATCC 204508 / S288c) (Baker's yeast).